The chain runs to 206 residues: Small ribosomal subunit protein uS4 (206 aa).

The 61-residue stretch at 96–156 (RRLDNVVYRM…DKSKNQSRIK (61 aa)) folds into the S4 RNA-binding domain.

Belongs to the universal ribosomal protein uS4 family. In terms of assembly, part of the 30S ribosomal subunit. Contacts protein S5. The interaction surface between S4 and S5 is involved in control of translational fidelity.

Its function is as follows. One of the primary rRNA binding proteins, it binds directly to 16S rRNA where it nucleates assembly of the body of the 30S subunit. In terms of biological role, with S5 and S12 plays an important role in translational accuracy. The polypeptide is Small ribosomal subunit protein uS4 (Buchnera aphidicola subsp. Schizaphis graminum (strain Sg)).